The sequence spans 325 residues: GMP reductase (325 aa).

Cys-174 serves as the catalytic Thioimidate intermediate. An NADP(+)-binding site is contributed by 203–226; the sequence is LIADGGIRTHGDIAKSIRFGASMV.

The protein belongs to the IMPDH/GMPR family. GuaC type 2 subfamily.

The enzyme catalyses IMP + NH4(+) + NADP(+) = GMP + NADPH + 2 H(+). Catalyzes the irreversible NADPH-dependent deamination of GMP to IMP. It functions in the conversion of nucleobase, nucleoside and nucleotide derivatives of G to A nucleotides, and in maintaining the intracellular balance of A and G nucleotides. In Staphylococcus aureus (strain bovine RF122 / ET3-1), this protein is GMP reductase.